The following is a 130-amino-acid chain: Small ribosomal subunit protein uS8 (130 aa).

Belongs to the universal ribosomal protein uS8 family. Part of the 30S ribosomal subunit. Contacts proteins S5 and S12.

One of the primary rRNA binding proteins, it binds directly to 16S rRNA central domain where it helps coordinate assembly of the platform of the 30S subunit. The chain is Small ribosomal subunit protein uS8 from Ectopseudomonas mendocina (strain ymp) (Pseudomonas mendocina).